The primary structure comprises 96 residues: Antigen H4 (96 aa).

The interval 1–20 (EFQEEIKEGVEEHKHEDDPE) is disordered. An N-linked (GlcNAc...) asparagine glycan is attached at Asn-34.

This is Antigen H4 (H4) from Toxoplasma gondii.